Consider the following 366-residue polypeptide: Chorismate synthase (366 aa).

The NADP(+) site is built by Arg-48 and Arg-54. FMN is bound by residues 132-134 (RSS), 244-245 (NA), Gly-289, 304-308 (KPTSS), and Arg-330.

The protein belongs to the chorismate synthase family. As to quaternary structure, homotetramer. FMNH2 is required as a cofactor.

It catalyses the reaction 5-O-(1-carboxyvinyl)-3-phosphoshikimate = chorismate + phosphate. Its pathway is metabolic intermediate biosynthesis; chorismate biosynthesis; chorismate from D-erythrose 4-phosphate and phosphoenolpyruvate: step 7/7. Catalyzes the anti-1,4-elimination of the C-3 phosphate and the C-6 proR hydrogen from 5-enolpyruvylshikimate-3-phosphate (EPSP) to yield chorismate, which is the branch point compound that serves as the starting substrate for the three terminal pathways of aromatic amino acid biosynthesis. This reaction introduces a second double bond into the aromatic ring system. The polypeptide is Chorismate synthase (Methylorubrum extorquens (strain PA1) (Methylobacterium extorquens)).